Consider the following 144-residue polypeptide: Maximins 3/H11 type 2 (144 aa).

The first 18 residues, 1-18 (MHFKYIVAVSFLIASAYA), serve as a signal peptide directing secretion. Propeptides lie at residues 19–43 (RSVQNDEQSLSQRDVLEEESLREIR) and 73–122 (RTAE…KKEK). Position 143 is an isoleucine amide (Ile-143).

It belongs to the bombinin family. As to expression, expressed by the skin glands.

Its subcellular location is the secreted. In terms of biological role, maximin-3 shows antibacterial activity against both Gram-positive and Gram-negative bacteria. It also shows antimicrobial activity against the fungus C.albicans, but not against A.flavus nor P.uticale. It has little hemolytic activity. It possess a significant cytotoxicity against tumor cell lines. It possess a significant anti-HIV activity. It shows high spermicidal activity. Maximin-H11 shows antimicrobial activity against bacteria and against the fungus C.albicans. Shows strong hemolytic activity. This is Maximins 3/H11 type 2 from Bombina maxima (Giant fire-bellied toad).